The sequence spans 88 residues: Small ribosomal subunit protein uS15 (88 aa).

Belongs to the universal ribosomal protein uS15 family. Part of the 30S ribosomal subunit. Forms a bridge to the 50S subunit in the 70S ribosome, contacting the 23S rRNA.

Its function is as follows. One of the primary rRNA binding proteins, it binds directly to 16S rRNA where it helps nucleate assembly of the platform of the 30S subunit by binding and bridging several RNA helices of the 16S rRNA. In terms of biological role, forms an intersubunit bridge (bridge B4) with the 23S rRNA of the 50S subunit in the ribosome. The chain is Small ribosomal subunit protein uS15 from Trichlorobacter lovleyi (strain ATCC BAA-1151 / DSM 17278 / SZ) (Geobacter lovleyi).